The primary structure comprises 784 residues: Toll-like receptor 2 (784 aa).

Residues 1–24 (MLRALWLFWILVAITVLFSKRCSA) form the signal peptide. Topologically, residues 25-587 (QESLSCDASG…ARPSVLECHQ (563 aa)) are extracellular. Cysteines 30 and 36 form a disulfide. LRR repeat units follow at residues 54–77 (MKSLDLSFNKITYIGHGDLRACAN), 78–101 (LQVLILKSSRINTIEGDAFYSLGS), 102–125 (LEHLDLSDNHLSSLSSSWFGPLSS), 126–150 (LKYLNLMGNPYQTLGVTSLFPNLTN), 151–175 (LQTLRIGNVETFSEIRRIDFAGLTS), 176–199 (LNELEIKALSLRNYQSQSLKSIRD), 200–223 (IHHLTLHLSESAFLLEIFADILSS), 224–250 (VRYLELRDTNLARFQFSPLPVDEVSSP), 251–278 (MKKLAFRGSVLTDESFNELLKLLRYILE), 279–308 (LSEVEFDDCTLNGLGDFNPSESDVVSELGK), 309–337 (VETVTIRRLHIPQFYLFYDLSTVYSLLEK), 338–361 (VKRITVENSKVFLVPCSFSQHLKS), 362–388 (LEFLDLSENLMVEEYLKNSACKGAWPS), 389–414 (LQTLVLSQNHLRSMQKTGEILLTLKN), 415–437 (LTSLDISRNTFHPMPDSCQWPEK), 438–457 (MRFLNLSSTGIRVVKTCIPQ), 458–478 (TLEVLDVSNNNLDSFSLFLPR), 479–500 (LQELYISRNKLKTLPDASLFPV), and 501–524 (LLVMKIRENAVSTFSKDQLGSFPK). A glycan (N-linked (GlcNAc...) asparagine) is linked at Asn-147. An intrachain disulfide couples Cys-353 to Cys-382. Asn-414 carries an N-linked (GlcNAc...) asparagine glycan. A disulfide bond links Cys-432 and Cys-454. N-linked (GlcNAc...) asparagine glycosylation is present at Asn-442. One can recognise an LRRCT domain in the interval 525–576 (LETLEAGDNHFVCSCELLSFTMETPALAQILVDWPDSYLCDSPPRLHGHRLQ). A helical transmembrane segment spans residues 588–608 (AALVSGVCCALLLLILLVGAL). Residues 609-784 (CHHFHGLWYL…WVNLRTAIKS (176 aa)) lie on the Cytoplasmic side of the membrane. Positions 639 to 782 (VCYDAFVSYS…VFWVNLRTAI (144 aa)) constitute a TIR domain. A Glycyl lysine isopeptide (Lys-Gly) (interchain with G-Cter in ubiquitin) cross-link involves residue Lys-754. Residues 761 to 778 (YLEWPLDEGQQEVFWVNL) carry the ATG16L1-binding motif motif.

This sequence belongs to the Toll-like receptor family. Interacts with LY96, TLR1 and TLR6 (via extracellular domain). TLR2 seems to exist in heterodimers with either TLR1 or TLR6 before stimulation by the ligand. The heterodimers form bigger oligomers in response to their corresponding ligands as well as further heterotypic associations with other receptors such as CD14 and/or CD36. Binds MYD88 (via TIR domain). Interacts with TICAM1. Interacts with CNPY3. Interacts with ATG16L1. Interacts with non-modified M.tuberculosis protein MPT83. Interacts with PPP1R11. Interacts with TIRAP. As to quaternary structure, (Microbial infection) Interacts with Staphylococcus aureus protein SSL3; this interaction inhibits TLR2-mediated cytokine production. In terms of assembly, (Microbial infection) Interacts with Toxoplasma gondii micronemal protein 1 (MIC1); the interaction promotes activation of bone marrow-derived dendritic cells and macrophages. Interacts with Toxoplasma gondii micronemal protein 4 (MIC4); the interaction promotes activation of bone marrow-derived dendritic cells and macrophages. Post-translationally, ubiquitinated at Lys-754 by PPP1R11, leading to its degradation. Deubiquitinated by USP2. Glycosylation of Asn-442 is critical for secretion of the N-terminal ectodomain of TLR2. Detected in a macrophage cell line, smooth muscle, lung, spleen, thymus, brain and adipose tissue. Cell surface expression detected in lung alveolar macrophages, dendritic macrophages and at lower levels in lung macrophages (at protein level).

The protein localises to the cell membrane. It localises to the cytoplasmic vesicle. The protein resides in the phagosome membrane. It is found in the membrane raft. Its function is as follows. Cooperates with LY96 to mediate the innate immune response to bacterial lipoproteins and other microbial cell wall components. Cooperates with TLR1 or TLR6 to mediate the innate immune response to bacterial lipoproteins or lipopeptides. Acts via MYD88 and TRAF6, leading to NF-kappa-B activation, cytokine secretion and the inflammatory response. May also promote apoptosis in response to lipoproteins. Forms activation clusters composed of several receptors depending on the ligand, these clusters trigger signaling from the cell surface and subsequently are targeted to the Golgi in a lipid-raft dependent pathway. Forms the cluster TLR2:TLR6:CD14:CD36 in response to diacylated lipopeptides and TLR2:TLR1:CD14 in response to triacylated lipopeptides. Recognizes M.tuberculosis major T-antigen EsxA (ESAT-6) which inhibits downstream MYD88-dependent signaling. Acts as the major receptor for M.tuberculosis lipoproteins LprA, LprG, LpqH and PhoS1 (pstS1), in conjunction with TLR1 and for some but not all lipoproteins CD14 and/or CD36. The lipoproteins act as agonists to modulate antigen presenting cell functions in response to the pathogen. Recombinant MPT83 from M.tuberculosis stimulates secretion of cytokines (TNF-alpha, IL-6 and IL-12p40) by mouse macrophage cell lines in a TLR2-dependent fashion, which leads to increased host innate immunity responses against the bacterium. Lung macrophages which express low levels of TLR2 respond poorly to stimulation by M.tuberculosis LpqH. Required for normal uptake of M.tuberculosis, a process that is inhibited by M.tuberculosis LppM. Interacts with TICAM2. Functionally, (Microbial infection) Mediates activation of bone marrow-derived dendritic cells and macrophages, and production of pro-inflammatory cytokines, such as IL12 (IL12B/IL12A), triggered by Toxoplasma gondii micronemal protein 4 (MIC4) and micronemal protein 1 (MIC1). This chain is Toll-like receptor 2 (Tlr2), found in Mus musculus (Mouse).